The primary structure comprises 95 residues: Glutamyl-tRNA(Gln) amidotransferase subunit C (95 aa).

This sequence belongs to the GatC family. In terms of assembly, heterotrimer of A, B and C subunits.

The catalysed reaction is L-glutamyl-tRNA(Gln) + L-glutamine + ATP + H2O = L-glutaminyl-tRNA(Gln) + L-glutamate + ADP + phosphate + H(+). The enzyme catalyses L-aspartyl-tRNA(Asn) + L-glutamine + ATP + H2O = L-asparaginyl-tRNA(Asn) + L-glutamate + ADP + phosphate + 2 H(+). Functionally, allows the formation of correctly charged Asn-tRNA(Asn) or Gln-tRNA(Gln) through the transamidation of misacylated Asp-tRNA(Asn) or Glu-tRNA(Gln) in organisms which lack either or both of asparaginyl-tRNA or glutaminyl-tRNA synthetases. The reaction takes place in the presence of glutamine and ATP through an activated phospho-Asp-tRNA(Asn) or phospho-Glu-tRNA(Gln). This chain is Glutamyl-tRNA(Gln) amidotransferase subunit C, found in Mesorhizobium japonicum (strain LMG 29417 / CECT 9101 / MAFF 303099) (Mesorhizobium loti (strain MAFF 303099)).